A 695-amino-acid chain; its full sequence is MSGPHRTFSFEQRGDGEAHSSFMDHAMHPQYDDVSPISNMSSSPGHMNETHHGLASVPEDNHQGWGQARGPSPSNRTGFTATPEMDNLGPASVGGGISGIALGVANSHDRLSGVEARRGTDGQEANIPAERGYNTTGSDNPYIPAPPDMGGYGSSETLHPRQSYGSNVALGAAAGPAGQLTPGHSATHLGTSNSSQRNLYDAPYQSAGGLSAGPYQRHSAYSSNDLPLDINPEEIADDGDDGFAPAGNSRSSARRSQAVPAAAGGAAAGGVLGGIGGLFNNRNPAETSYDPVPGAGLEAGEKSQWVKPKPSTGSRKRGWIIGAILAVIIIGAIVGGAVGGTIGHKDSGDSASGSSASTQSASGDTDTNGDLDKNSAEIKALMNNKDLHKVFPGMDYTPWGVQYPLCLKYPPSQNNVTRDMAVLAQLTNNVRLYGTDCNQTEMVLHAIDKLDLKDMKVWLGVWIDTNETTSRRQIDQLYKIVDDAKDISIFNGAIVGNEALFRAGDNKITAQATLTKYMQEVRDHFKKHDIKMPIATSDLGDNWNAELVQIADVVMSNVHPFFGGIPVDQAAAWTWRFWQDHDVILTQGTDKRQVISEVGWPSGGGNDCGKGANCPDDTSGAVAGIDELNKFMEDWVCQALDNGTDYFWFEAFDEPWKIEFNTKNENWEDKWGLMDPARKLKSGLKIPDCGGKTAA.

Disordered regions lie at residues 1–53 (MSGP…THHG), 117–140 (RRGTDGQEANIPAERGYNTTGSDN), 175–258 (GPAG…RSQA), and 286–314 (ETSYDPVPGAGLEAGEKSQWVKPKPSTGS). Residues 1-317 (MSGPHRTFSF…PKPSTGSRKR (317 aa)) lie on the Cytoplasmic side of the membrane. The segment covering 36–45 (PISNMSSSPG) has biased composition (polar residues). Over residues 188–198 (HLGTSNSSQRN) the composition is skewed to polar residues. Over residues 231–241 (NPEEIADDGDD) the composition is skewed to acidic residues. Residues 318-338 (GWIIGAILAVIIIGAIVGGAV) traverse the membrane as a helical; Signal-anchor for type II membrane protein segment. Topologically, residues 339–695 (GGTIGHKDSG…IPDCGGKTAA (357 aa)) are extracellular. Positions 346-372 (DSGDSASGSSASTQSASGDTDTNGDLD) are disordered. The span at 349–366 (DSASGSSASTQSASGDTD) shows a compositional bias: low complexity. N-linked (GlcNAc...) asparagine glycans are attached at residues Asn-415, Asn-438, and Asn-466. Glu-498 (proton donor) is an active-site residue. Glu-597 acts as the Nucleophile in catalysis. N-linked (GlcNAc...) asparagine glycosylation occurs at Asn-642.

Belongs to the glycosyl hydrolase 17 family.

It localises to the cell membrane. The catalysed reaction is Hydrolysis of (1-&gt;3)-beta-D-glucosidic linkages in (1-&gt;3)-beta-D-glucans.. In terms of biological role, glucanases play a role in cell expansion during growth, in cell-cell fusion during mating, and in spore release during sporulation. This enzyme may be involved in beta-glucan degradation. Active on laminarin and lichenan. In Aspergillus clavatus (strain ATCC 1007 / CBS 513.65 / DSM 816 / NCTC 3887 / NRRL 1 / QM 1276 / 107), this protein is Probable glucan endo-1,3-beta-glucosidase btgC (btgC).